The sequence spans 240 residues: Uridylate cyclase (240 aa).

Positions 45–180 constitute a Guanylate cyclase domain; the sequence is TYLYADMANS…RAPNLAAKLS (136 aa). Y48 serves as a coordination point for a ribonucleoside 5'-triphosphate. Residues D50 and D94 each coordinate Mn(2+). R95 contributes to the a ribonucleoside 5'-triphosphate binding site.

Belongs to the adenylyl cyclase class-4/guanylyl cyclase family. Pyrimidine cyclase subfamily. As to quaternary structure, homodimer. Requires Mn(2+) as cofactor.

Its subcellular location is the cytoplasm. It carries out the reaction UTP = 3',5'-cyclic UMP + diphosphate. In terms of biological role, pycsar (pyrimidine cyclase system for antiphage resistance) provides immunity against bacteriophage. The pyrimidine cyclase (PycC) synthesizes cyclic nucleotides in response to infection; these serve as specific second messenger signals. The signals activate the adjacent effector, leading to bacterial cell death and abortive phage infection. A clade B Pycsar system. The pyrimidine cyclase gene of a two-gene Pycsar system, weakly generates cyclic UMP (cUMP) from UTP, has little to no activity on ATP, CTP or GTP. Expression of this and adjacent effector RsmPycTM (AC A0A1V0HUU2) probably confers resistance to bacteriophage. The genes are probably only expressed in response to bacteriophage infection. In Rhodovulum sp. (strain MB263), this protein is Uridylate cyclase.